Consider the following 528-residue polypeptide: Ceramide glucosyltransferase (528 aa).

Over 1–6 (MYSFIE) the chain is Lumenal. A helical membrane pass occupies residues 7 to 27 (CIAGALFVLGCVVVTLVVIGV). At 28-369 (RALLYNFRNR…TVLSATILEP (342 aa)) the chain is on the cytoplasmic side. D94 is a short sequence motif (D1). A short sequence motif (D2) is located at residue D154. A short sequence motif (D3) is located at residue D308. Catalysis depends on D308, which acts as the Proton acceptor. The short motif at 349–353 (RRSRW) is the (Q/R)XXRW element. A helical transmembrane segment spans residues 370-390 (FTECFLFATYMSLAMTTIPVL). The Lumenal portion of the chain corresponds to 391-402 (SQNLGIPKTWNA). Residues 403 to 423 (TAIAWFTITTLWMLIDYIGYL) form a helical membrane-spanning segment. Residues 424 to 457 (RLHSGVTMEVDEHTPYFAKGFKNTGGIKRRPFLE) lie on the Cytoplasmic side of the membrane. The helical transmembrane segment at 458–478 (FLAAWIGREGLAFPVWAYAVV) threads the bilayer. Residues 479 to 528 (FGNTVNWRGRLFYIHWDTTVDAVEPREERTREVRTPELERGPSRNKHRVD) are Lumenal-facing. A disordered region spans residues 503 to 528 (PREERTREVRTPELERGPSRNKHRVD).

It belongs to the glycosyltransferase 2 family.

Its subcellular location is the golgi apparatus membrane. It carries out the reaction an N-acylsphing-4-enine + UDP-alpha-D-glucose = a beta-D-glucosyl-(1&lt;-&gt;1')-N-acylsphing-4-enine + UDP + H(+). It functions in the pathway lipid metabolism; sphingolipid metabolism. Functionally, catalyzes the final step in the biosynthesis of the membrane lipid glucosylceramide (GluCer), the transfer of glucose to ceramide. Glucosylceramides play important roles in growth, differentiation and pathogenicity. Contribution to fungal pathogenesis is host-dependent. The chain is Ceramide glucosyltransferase from Gibberella zeae (strain ATCC MYA-4620 / CBS 123657 / FGSC 9075 / NRRL 31084 / PH-1) (Wheat head blight fungus).